Consider the following 116-residue polypeptide: U3-theraphotoxin-Lsp1a (116 aa).

A signal peptide spans 1–17; it reads MKLSTFIIMISLAVALA. The propeptide occupies 18-50; it reads TWPSEHIEGSDSETKLNVELGPYALADRAEKGK.

It belongs to the neurotoxin 25 family. F7 subfamily. Post-translationally, contains 3 disulfide bonds. Expressed by the venom gland.

It is found in the secreted. The sequence is that of U3-theraphotoxin-Lsp1a from Lasiodora sp. (strain IBSP 8539) (Brazilian salmon pink birdeater).